The primary structure comprises 147 residues: Cystatin-9-like (147 aa).

The N-terminal stretch at 1–28 (MLGLPWKGGLSWALLLLLLGSQILLIYA) is a signal peptide. Cys-98 and Cys-108 are disulfide-bonded. Residues Asn-117 and Asn-139 are each glycosylated (N-linked (GlcNAc...) asparagine). An intrachain disulfide couples Cys-122 to Cys-142.

This sequence belongs to the cystatin family. Specifically expressed in testis.

It localises to the secreted. This Homo sapiens (Human) protein is Cystatin-9-like (CST9L).